The primary structure comprises 318 residues: Homoserine kinase (318 aa).

ATP is bound at residue 97-107 (PIGSGLGSSAC).

This sequence belongs to the GHMP kinase family. Homoserine kinase subfamily.

It is found in the cytoplasm. It carries out the reaction L-homoserine + ATP = O-phospho-L-homoserine + ADP + H(+). It participates in amino-acid biosynthesis; L-threonine biosynthesis; L-threonine from L-aspartate: step 4/5. Catalyzes the ATP-dependent phosphorylation of L-homoserine to L-homoserine phosphate. This is Homoserine kinase from Aliivibrio salmonicida (strain LFI1238) (Vibrio salmonicida (strain LFI1238)).